Reading from the N-terminus, the 320-residue chain is Lipoyl synthase (320 aa).

The segment covering 1–29 has biased composition (basic and acidic residues); it reads MIGKLVRDLKIPDQRHPEKAHRPDNDQPR. Residues 1–32 are disordered; it reads MIGKLVRDLKIPDQRHPEKAHRPDNDQPRKPS. Residues C60, C65, C71, C86, C90, C93, and S300 each contribute to the [4Fe-4S] cluster site. The 219-residue stretch at 71–289 folds into the Radical SAM core domain; the sequence is CWGQGHATMM…EKAAYGKGFL (219 aa).

The protein belongs to the radical SAM superfamily. Lipoyl synthase family. The cofactor is [4Fe-4S] cluster.

The protein resides in the cytoplasm. It catalyses the reaction [[Fe-S] cluster scaffold protein carrying a second [4Fe-4S](2+) cluster] + N(6)-octanoyl-L-lysyl-[protein] + 2 oxidized [2Fe-2S]-[ferredoxin] + 2 S-adenosyl-L-methionine + 4 H(+) = [[Fe-S] cluster scaffold protein] + N(6)-[(R)-dihydrolipoyl]-L-lysyl-[protein] + 4 Fe(3+) + 2 hydrogen sulfide + 2 5'-deoxyadenosine + 2 L-methionine + 2 reduced [2Fe-2S]-[ferredoxin]. It functions in the pathway protein modification; protein lipoylation via endogenous pathway; protein N(6)-(lipoyl)lysine from octanoyl-[acyl-carrier-protein]: step 2/2. Functionally, catalyzes the radical-mediated insertion of two sulfur atoms into the C-6 and C-8 positions of the octanoyl moiety bound to the lipoyl domains of lipoate-dependent enzymes, thereby converting the octanoylated domains into lipoylated derivatives. In Cereibacter sphaeroides (strain ATCC 17025 / ATH 2.4.3) (Rhodobacter sphaeroides), this protein is Lipoyl synthase.